Reading from the N-terminus, the 475-residue chain is Probable sensor histidine kinase TcrY (475 aa).

Residues 1–153 (MGITAATEMA…NVDATMLQML (153 aa)) lie on the Extracellular side of the membrane. A helical membrane pass occupies residues 154 to 174 (IIFGIVTVIALVAATTAGIVI). Residues 175–475 (IKRALAPLRR…GWQPLESSPR (301 aa)) lie on the Cytoplasmic side of the membrane. In terms of domain architecture, HAMP spans 176 to 238 (KRALAPLRRV…MLDHIAAALS (63 aa)). In terms of domain architecture, Histidine kinase spans 253–466 (DASHELRTPL…EFAVRLPLDG (214 aa)). His-256 bears the Phosphohistidine; by autocatalysis mark.

As to quaternary structure, homodimer. A divalent metal cation is required as a cofactor. Autophosphorylated.

It localises to the cell membrane. The catalysed reaction is ATP + protein L-histidine = ADP + protein N-phospho-L-histidine.. Functionally, member of the two-component regulatory system TcrY/TcrX. Activates TcrX by phosphorylation. The chain is Probable sensor histidine kinase TcrY (tcrY) from Mycobacterium tuberculosis (strain ATCC 25618 / H37Rv).